The chain runs to 215 residues: Probable phosphoglycerate mutase GpmB (215 aa).

Residues 8 to 15 (RHGETQWN), 21 to 22 (QG), arginine 58, lysine 60, 82 to 85 (ELDM), 104 to 105 (RR), and 151 to 152 (GI) each bind substrate. The active-site Tele-phosphohistidine intermediate is the histidine 9. Glutamate 82 functions as the Proton donor/acceptor in the catalytic mechanism.

It belongs to the phosphoglycerate mutase family. GpmB subfamily.

The enzyme catalyses (2R)-2-phosphoglycerate = (2R)-3-phosphoglycerate. Its pathway is carbohydrate degradation; glycolysis; pyruvate from D-glyceraldehyde 3-phosphate: step 3/5. In Salmonella arizonae (strain ATCC BAA-731 / CDC346-86 / RSK2980), this protein is Probable phosphoglycerate mutase GpmB.